The sequence spans 346 residues: Glycerol-1-phosphate dehydrogenase [NAD(P)+] (346 aa).

Residues 93–97 and 115–118 each bind NAD(+); these read GSIID and TTAS. Aspartate 120 contacts substrate. Residue serine 124 coordinates NAD(+). Aspartate 167 is a substrate binding site. Aspartate 167 and histidine 247 together coordinate Zn(2+). Substrate is bound at residue histidine 251. Histidine 263 contributes to the Zn(2+) binding site.

This sequence belongs to the glycerol-1-phosphate dehydrogenase family. Zn(2+) is required as a cofactor.

Its subcellular location is the cytoplasm. The enzyme catalyses sn-glycerol 1-phosphate + NAD(+) = dihydroxyacetone phosphate + NADH + H(+). The catalysed reaction is sn-glycerol 1-phosphate + NADP(+) = dihydroxyacetone phosphate + NADPH + H(+). It functions in the pathway membrane lipid metabolism; glycerophospholipid metabolism. Catalyzes the NAD(P)H-dependent reduction of dihydroxyacetonephosphate (DHAP or glycerone phosphate) to glycerol 1-phosphate (G1P). The G1P thus generated is used as the glycerophosphate backbone of phospholipids in the cellular membranes of Archaea. The sequence is that of Glycerol-1-phosphate dehydrogenase [NAD(P)+] from Pyrococcus horikoshii (strain ATCC 700860 / DSM 12428 / JCM 9974 / NBRC 100139 / OT-3).